The sequence spans 193 residues: ATP-dependent Clp protease proteolytic subunit (193 aa).

Residue Ser98 is the Nucleophile of the active site. His123 is an active-site residue.

The protein belongs to the peptidase S14 family. In terms of assembly, fourteen ClpP subunits assemble into 2 heptameric rings which stack back to back to give a disk-like structure with a central cavity, resembling the structure of eukaryotic proteasomes.

The protein localises to the cytoplasm. The catalysed reaction is Hydrolysis of proteins to small peptides in the presence of ATP and magnesium. alpha-casein is the usual test substrate. In the absence of ATP, only oligopeptides shorter than five residues are hydrolyzed (such as succinyl-Leu-Tyr-|-NHMec, and Leu-Tyr-Leu-|-Tyr-Trp, in which cleavage of the -Tyr-|-Leu- and -Tyr-|-Trp bonds also occurs).. In terms of biological role, cleaves peptides in various proteins in a process that requires ATP hydrolysis. Has a chymotrypsin-like activity. Plays a major role in the degradation of misfolded proteins. The chain is ATP-dependent Clp protease proteolytic subunit from Pasteurella multocida (strain Pm70).